Here is a 364-residue protein sequence, read N- to C-terminus: D-alanine--D-alanine ligase (364 aa).

Residues 134-347 (RRLACINGLK…YPDLLDELIN (214 aa)) enclose the ATP-grasp domain. 167–222 (ASEFGWPLFVKPCSLGSSVGIHKANNMDELNAAVADALRYDEEILVEEFIVGREIE) contributes to the ATP binding site. Asp-300, Glu-314, and Asn-316 together coordinate Mg(2+).

It belongs to the D-alanine--D-alanine ligase family. Mg(2+) serves as cofactor. Requires Mn(2+) as cofactor.

The protein localises to the cytoplasm. The catalysed reaction is 2 D-alanine + ATP = D-alanyl-D-alanine + ADP + phosphate + H(+). It functions in the pathway cell wall biogenesis; peptidoglycan biosynthesis. Cell wall formation. This chain is D-alanine--D-alanine ligase, found in Legionella pneumophila (strain Lens).